The chain runs to 478 residues: Septin-4 (478 aa).

Disordered stretches follow at residues 40–74 (DFSG…LYDD) and 87–115 (ADNQ…LDPY). Positions 95–108 (APAPLSPSARPRSP) are enriched in low complexity. A phosphoserine mark is found at serine 117 and serine 118. The 274-residue stretch at 141 to 414 (KGFDFTLMVA…ENYRAQCIQS (274 aa)) folds into the Septin-type G domain. Positions 151–158 (GESGLGKS) are G1 motif. GTP contacts are provided by residues 151–158 (GESGLGKS) and threonine 185. The tract at residues 208-211 (DTPG) is G3 motif. The G4 motif stretch occupies residues 289-292 (AKAD). Position 290–298 (290–298 (KADTLTPPE)) interacts with GTP. Serine 325 is subject to Phosphoserine. The GTP site is built by glycine 348 and arginine 363. The tract at residues 428-448 (LTRESGTDFPIPAVPPGTDPE) is disordered. A Phosphoserine modification is found at serine 432. Threonine 434 bears the Phosphothreonine mark. Residues 446–478 (DPETEKLIREKDEELRRMQEILHKIQKQMKETY) are a coiled coil.

Belongs to the TRAFAC class TrmE-Era-EngA-EngB-Septin-like GTPase superfamily. Septin GTPase family. Septins polymerize into heterooligomeric protein complexes that form filaments, and can associate with cellular membranes, actin filaments and microtubules. GTPase activity is required for filament formation. Interacts with SEPTIN8. Component of a septin core octameric complex consisting of SEPTIN12, SEPTIN7, SEPTIN6 and SEPTIN2 or SEPTIN4 in the order 12-7-6-2-2-6-7-12 or 12-7-6-4-4-6-7-12. Interacts with SEPTIN14 (via C-terminus). Interacts with DYRK1A. Interacts with SLC6A3/DAT and SNCA/alpha-synuclein. Interacts with STX1A; in the striatum. Interacts with XIAP (via BIR3 domain) following the induction of apoptosis. Interacts with AREL1 (via HECT domain); in the cytoplasm following induction of apoptosis. Ubiquitinated by AREL1. In terms of processing, phosphorylated by DYRK1A.

It localises to the cytoplasm. The protein resides in the cell projection. Its subcellular location is the cilium. It is found in the flagellum. The protein localises to the cytoplasmic vesicle. It localises to the secretory vesicle. The protein resides in the axon. Its subcellular location is the dendrite. It is found in the perikaryon. The protein localises to the synapse. Functionally, filament-forming cytoskeletal GTPase. Pro-apoptotic protein involved in LGR5-positive intestinal stem cell and Paneth cell expansion in the intestines, via its interaction with XIAP. May also play a role in the regulation of cell fate in the intestine. Positive regulator of apoptosis involved in hematopoietic stem cell homeostasis; via its interaction with XIAP. Negative regulator of repair and hair follicle regeneration in response to injury, due to inhibition of hair follicle stem cell proliferation, potentially via its interaction with XIAP. Plays an important role in male fertility and sperm motility. During spermiogenesis, essential for the establishment of the annulus (a fibrous ring structure connecting the midpiece and the principal piece of the sperm flagellum) which is a requisite for the structural and mechanical integrity of the sperm. Involved in the migration of cortical neurons and the formation of neuron leading processes during embryonic development. Required for dopaminergic metabolism in presynaptic autoreceptors; potentially via activity as a presynaptic scaffold protein. The protein is Septin-4 of Macaca fascicularis (Crab-eating macaque).